A 307-amino-acid chain; its full sequence is Glutathione synthetase (307 aa).

Positions 120-304 (KLGALRFSRW…LADQTIERLR (185 aa)) constitute an ATP-grasp domain. Residue 146–202 (AREQGDVVLKPLGGRAGLGVIRVQAEAPGLKALLELVTEQERLPVMAQRFLPDVTEG) coordinates ATP. The Mg(2+) site is built by E275 and N277.

This sequence belongs to the prokaryotic GSH synthase family. Requires Mg(2+) as cofactor. It depends on Mn(2+) as a cofactor.

It carries out the reaction gamma-L-glutamyl-L-cysteine + glycine + ATP = glutathione + ADP + phosphate + H(+). The protein operates within sulfur metabolism; glutathione biosynthesis; glutathione from L-cysteine and L-glutamate: step 2/2. The sequence is that of Glutathione synthetase from Parasynechococcus marenigrum (strain WH8102).